The following is a 118-amino-acid chain: MEETLATPDATRRSLSPSCSATVKSRAAGFERRTKRRLSETNASVREDREEAEEEEDEVKEKIEALQRIIPGGAALGVDALFEETAGYILSLQCQIKTIKVLTSFLQRIDQEDMKFGG.

The tract at residues 1–58 (MEETLATPDATRRSLSPSCSATVKSRAAGFERRTKRRLSETNASVREDREEAEEEEDE) is disordered. Positions 13–23 (RSLSPSCSATV) are enriched in polar residues. The bHLH domain occupies 43 to 92 (ASVREDREEAEEEEDEVKEKIEALQRIIPGGAALGVDALFEETAGYILSL).

The protein belongs to the bHLH protein family. In terms of assembly, homodimer.

It is found in the nucleus. Its function is as follows. Atypical bHLH transcription factor that acts as a negative regulator of a variety of shade avoidance syndrome (SAS) responses, including seedling elongation and photosynthetic pigment accumulation. Acts as a direct transcriptional repressor of two auxin-responsive genes, SAUR15 and SAUR68. May function in integrating shade and hormone transcriptional networks in response to light and auxin changes. This Arabidopsis thaliana (Mouse-ear cress) protein is Transcription factor PAR1 (PAR1).